We begin with the raw amino-acid sequence, 158 residues long: MALRTIRVEGDPVLGKVCREVTEVTPKIVTLIDDMLETMYEANGVGLAAPQVGILKRIVVIDVGEGPIVMINPEIIESDGEQTGDEGCLSVPGKAGQVTRPNYVKARFMGEDMNEYEIEGEELLARCICHELDHLDGHLYVEKVEGALHDVTYEDTQE.

Positions 88 and 130 each coordinate Fe cation. Glu131 is a catalytic residue. Fe cation is bound at residue His134.

Belongs to the polypeptide deformylase family. Fe(2+) is required as a cofactor.

The enzyme catalyses N-terminal N-formyl-L-methionyl-[peptide] + H2O = N-terminal L-methionyl-[peptide] + formate. Its function is as follows. Removes the formyl group from the N-terminal Met of newly synthesized proteins. Requires at least a dipeptide for an efficient rate of reaction. N-terminal L-methionine is a prerequisite for activity but the enzyme has broad specificity at other positions. This is Peptide deformylase from Agathobacter rectalis (strain ATCC 33656 / DSM 3377 / JCM 17463 / KCTC 5835 / VPI 0990) (Eubacterium rectale).